A 284-amino-acid polypeptide reads, in one-letter code: Cell division protein DivIB (284 aa).

Over residues 1–10 the composition is skewed to basic and acidic residues; it reads MAWLRKKEQQ. Positions 1-38 are disordered; it reads MAWLRKKEQQSDPLTPWQQYQARQQQTPRHDRRQKPKL. Residues 1–56 lie on the Cytoplasmic side of the membrane; the sequence is MAWLRKKEQQSDPLTPWQQYQARQQQTPRHDRRQKPKLDVNLPKIQTLRRRKLVKN. Residues 57–77 traverse the membrane as a helical segment; it reads LVLILLPLLLLLGVFGYFASP. At 78–284 the chain is on the extracellular side; the sequence is LSKVGLVSVQ…YSSSEKSSND (207 aa). In terms of domain architecture, POTRA spans 79 to 150; sequence SKVGLVSVQG…NRIIIKTSEY (72 aa).

This sequence belongs to the FtsQ/DivIB family. DivIB subfamily.

The protein localises to the cell membrane. Its function is as follows. Cell division protein that may be involved in stabilizing or promoting the assembly of the division complex. In Lacticaseibacillus rhamnosus (strain ATCC 53103 / LMG 18243 / GG) (Lactobacillus rhamnosus), this protein is Cell division protein DivIB.